A 664-amino-acid chain; its full sequence is Probable L-type lectin-domain containing receptor kinase V.3 (664 aa).

Positions 1 to 26 are cleaved as a signal peptide; that stretch reads MSMSCKINWLMVLVIIALSNLESSLG. At 27–278 the chain is on the extracellular side; sequence RLVFEGSAGL…YPKAESQVKL (252 aa). Positions 28–250 are legume-lectin like; sequence LVFEGSAGLM…AIHYMWMWYV (223 aa). N-linked (GlcNAc...) asparagine glycosylation is found at asparagine 69, asparagine 116, asparagine 122, asparagine 174, and asparagine 197. A helical membrane pass occupies residues 279–299; that stretch reads IVLVTFLTLALFVALAASALI. Topologically, residues 300–664 are cytoplasmic; it reads VFFYKRHKKL…LPSGRPRLFL (365 aa). Positions 335–617 constitute a Protein kinase domain; that stretch reads NGFKQLLGEG…GVSELPDNLL (283 aa). ATP is bound by residues 341–349 and lysine 364; that span reads LGEGGFGPV. Aspartate 461 functions as the Proton acceptor in the catalytic mechanism.

It in the C-terminal section; belongs to the protein kinase superfamily. Ser/Thr protein kinase family. This sequence in the N-terminal section; belongs to the leguminous lectin family.

It localises to the cell membrane. It catalyses the reaction L-seryl-[protein] + ATP = O-phospho-L-seryl-[protein] + ADP + H(+). The catalysed reaction is L-threonyl-[protein] + ATP = O-phospho-L-threonyl-[protein] + ADP + H(+). This is Probable L-type lectin-domain containing receptor kinase V.3 (LECRK53) from Arabidopsis thaliana (Mouse-ear cress).